Here is a 507-residue protein sequence, read N- to C-terminus: Acetylcholine receptor subunit beta-type lev-1 (507 aa).

Positions 1 to 31 (MMLGGGGGCGAGGTWLGFLVFLAVSLRNHST) are cleaved as a signal peptide. Asn-28, Asn-58, and Asn-109 each carry an N-linked (GlcNAc...) asparagine glycan. At 32 to 138 (CEDIDAEDRL…NNADGNYEVS (107 aa)) the chain is on the extracellular side. The chain crosses the membrane as a helical span at residues 139 to 159 (FMCNVLILSTGTVLWVPPAIY). Cys-163 and Cys-177 are joined by a disulfide. A run of 3 helical transmembrane segments spans residues 243–263 (VVLILPTVLMAFLNVTVFYLP), 271–291 (GLTMNVLLSIVVFLLLVSKIL), and 305–325 (LLLTFVLNIITIMVTTIICNI). Residues 373–392 (GPSVEENPMRSGEHHPLCRH) form a disordered region. The segment covering 379-392 (NPMRSGEHHPLCRH) has biased composition (basic and acidic residues). A helical transmembrane segment spans residues 454 to 474 (FLLYGFFGATVGGTIGIIFTA).

The protein belongs to the ligand-gated ion channel (TC 1.A.9) family. Acetylcholine receptor (TC 1.A.9.1) subfamily. Interacts with unc-29. Component of nicotinic acetylcholine receptor composed of 2 non-alpha subunits lev-1 and unc-29, and 3 alpha subunits unc-38, unc-63 and lev-8.

It is found in the postsynaptic cell membrane. Its subcellular location is the cell membrane. In terms of biological role, non-alpha subunit of nicotinic acetylcholine receptor (nAChR). Involved in nAChR sensitivity to nicotine. The polypeptide is Acetylcholine receptor subunit beta-type lev-1 (lev-1) (Caenorhabditis elegans).